The chain runs to 438 residues: MADYQGKNVVIIGLGLTGLSCVDFFLARGVTPRVMDTRMTPPGLDKLPEAVERHTGSLNDEWLMAADLIVASPGIAQAHPSLSAAADAGIEIVGDIELFCREAQAPIVAITGSNGKSTVTTLVGEMAKAAGVNVGVGGNIGLPALMLLDAECELYVLELSSFQLETTSSLQAVAATILNVTEDHMDRYPFGLQQYRAAKLRIYENAKVCVVNADDALTMPIRGADERCVSFGVNMGDYHLNHQQGETWLRVKGEKVLNVKEMKLSGQHNYTNALAALALADAAGLPRASSLKALTTFTGLPHRFEVVLEHNGVRWINDSKATNVGSTEAALNGLQVDGTLHLLLGGDGKSADFSPLARYLNGDNVRLYCFGRDGAQLAALRPEVAEQTETMEQAMRLLAPRVQLGDMVLLSPACASLDQFKNFEQRGNEFARLAKELG.

112-118 (GSNGKST) contributes to the ATP binding site.

Belongs to the MurCDEF family.

Its subcellular location is the cytoplasm. The catalysed reaction is UDP-N-acetyl-alpha-D-muramoyl-L-alanine + D-glutamate + ATP = UDP-N-acetyl-alpha-D-muramoyl-L-alanyl-D-glutamate + ADP + phosphate + H(+). The protein operates within cell wall biogenesis; peptidoglycan biosynthesis. Functionally, cell wall formation. Catalyzes the addition of glutamate to the nucleotide precursor UDP-N-acetylmuramoyl-L-alanine (UMA). This chain is UDP-N-acetylmuramoylalanine--D-glutamate ligase, found in Shigella sonnei (strain Ss046).